Here is a 249-residue protein sequence, read N- to C-terminus: Coproheme decarboxylase (249 aa).

Fe-coproporphyrin III contacts are provided by residues Arg131, 145–149 (YPMNK), His172, Gln185, and Ser223. Tyr145 is a catalytic residue.

The protein belongs to the ChdC family. Type 1 subfamily. Requires Fe-coproporphyrin III as cofactor.

The catalysed reaction is Fe-coproporphyrin III + 2 H2O2 + 2 H(+) = heme b + 2 CO2 + 4 H2O. It carries out the reaction Fe-coproporphyrin III + H2O2 + H(+) = harderoheme III + CO2 + 2 H2O. It catalyses the reaction harderoheme III + H2O2 + H(+) = heme b + CO2 + 2 H2O. It participates in porphyrin-containing compound metabolism; protoheme biosynthesis. Its function is as follows. Involved in coproporphyrin-dependent heme b biosynthesis. Catalyzes the decarboxylation of Fe-coproporphyrin III (coproheme) to heme b (protoheme IX), the last step of the pathway. The reaction occurs in a stepwise manner with a three-propionate intermediate. The sequence is that of Coproheme decarboxylase from Thermus thermophilus (strain ATCC BAA-163 / DSM 7039 / HB27).